Here is a 705-residue protein sequence, read N- to C-terminus: Choline transporter-like protein 2 (705 aa).

At 1-31 (MEDQRKYGAYGTPQKYDPTFKGPIYNRGCTD) the chain is on the cytoplasmic side. A Phosphothreonine modification is found at Thr12. Residues 32 to 52 (VLCCVLLFLAIVGYVAVGLIA) traverse the membrane as a helical segment. The Extracellular portion of the chain corresponds to 53-231 (WTHGDPRKVI…RIFEDYTVSW (179 aa)). Asn186 and Asn199 each carry an N-linked (GlcNAc...) asparagine glycan. Residues 232-252 (YWIVIGLVIAMVLSLLFIILL) form a helical membrane-spanning segment. Topologically, residues 253-255 (RFL) are cytoplasmic. The helical transmembrane segment at 256–276 (AGIMVWVMIVLVILVLGYGIF) threads the bilayer. The Extracellular segment spans residues 277 to 314 (HCYMEYARLRGEAGSDISVLDLGFQTDFRVYLHLRQTW). Residues 315–335 (LAFMIILSILEVIIILLLIFL) traverse the membrane as a helical segment. The Cytoplasmic segment spans residues 336–363 (RKRILIAIALIKEASRAVGYVMCSLLYP). Residues 364–384 (LVTFFLLCLCIAYWASTAVFL) form a helical membrane-spanning segment. Residues 385–455 (STSNEAVYKI…IFNAFMFFWL (71 aa)) are Extracellular-facing. Asn414 carries N-linked (GlcNAc...) asparagine glycosylation. A helical membrane pass occupies residues 456-478 (ANFVLALGQVTLAGAFASYYWAL). Topologically, residues 479–503 (RKPDDMPAFPLFAAFGRALRYHTGS) are cytoplasmic. Residues 504-524 (LAFGSLILAIVQIIRVILEYL) traverse the membrane as a helical segment. The Extracellular portion of the chain corresponds to 525-562 (DQRLKAAENKFAKFLMTCLKCCFWCLEKFIKFLNRNAY). A helical membrane pass occupies residues 563-583 (IMIAIYGTNFCTSARNAFFLL). The Cytoplasmic portion of the chain corresponds to 584–598 (MRNIIRVAVLDKVTD). A helical membrane pass occupies residues 599–619 (FLFLLGKLLIVGSVGILAFFF). The Extracellular portion of the chain corresponds to 620–637 (FTHRIRIVQDTAPPLNYY). Residues 638 to 658 (WVPILTVIVGSYLIAHGFFSV) traverse the membrane as a helical segment. Over 659-705 (YGMCVDTLFLCFLEDLERNNGSSERPYFMSSTLKKLLNKTNKKPVES) the chain is Cytoplasmic.

The protein belongs to the CTL (choline transporter-like) family. Interacts with COCH. Post-translationally, N-glycosylated; contains sialic acid. Not O-glycosylated. Expressed at high levels in lung, colon and in supporting cells of the inner ear (at protein level). Progressively lower levels in brain, tongue, liver and kidney (at protein level). In the tongue, strongly expressed in epithelial cells and in nerves within the musculature. Within the nerves, expression observed in the perineurial cells of the nerve sheath, in the Schwann cells and myelinated nerve fibers (at protein level). In the kidney, prominent expression in glomeruli in the lining of Bowman's capsule and on the mesangial cells adjacent to the vessels within the glomerulus (at protein level). Strongly expressed on the membranes of splenocytes (at protein level).

Its subcellular location is the cell membrane. The protein resides in the mitochondrion outer membrane. It carries out the reaction choline(out) + n H(+)(in) = choline(in) + n H(+)(out). It catalyses the reaction ethanolamine(out) + n H(+)(in) = ethanolamine(in) + n H(+)(out). In terms of biological role, choline/H+ antiporter, mainly in mitochodria. Also acts as a low-affinity ethanolamine/H+ antiporter, regulating the supply of extracellular ethanolamine (Etn) for the CDP-Etn pathway, redistribute intracellular Etn and balance the CDP-Cho and CDP-Etn arms of the Kennedy pathway. This chain is Choline transporter-like protein 2 (SLC44A2), found in Cavia porcellus (Guinea pig).